A 567-amino-acid chain; its full sequence is Zinc finger protein 512 (567 aa).

The interval 1 to 32 (MSSRLGAVPATSGPTTFKQQRSTRIVGAKNSR) is disordered. A compositionally biased stretch (polar residues) spans 12–23 (SGPTTFKQQRST). Residues K18 and K84 each participate in a glycyl lysine isopeptide (Lys-Gly) (interchain with G-Cter in SUMO2) cross-link. A disordered region spans residues 86-148 (AATSHVEGSG…QARRIRKEPP (63 aa)). Over residues 119 to 130 (KKHKLYGRKQRP) the composition is skewed to basic residues. Residues 197–220 (FTCHHCGKQLRSLAGMKYHVMANH) form a C2H2-type 1 zinc finger. Residue K227 forms a Glycyl lysine isopeptide (Lys-Gly) (interchain with G-Cter in SUMO2) linkage. The C2H2-type 2 zinc finger occupies 287–310 (LKCHHCGKPYRSKAGLAYHLRSEH). Residue K333 forms a Glycyl lysine isopeptide (Lys-Gly) (interchain with G-Cter in SUMO2) linkage. Residues 406-430 (IQCPNQGCEAVYSSVSGLKAHLGSC) form a C2H2-type 3; atypical zinc finger. The C2H2-type 4 zinc finger occupies 440–463 (YKCLLCQKEFVSESGVKYHINSVH). Residues 486–567 (QRQQEEEKRR…PKTNHKRGRK (82 aa)) are disordered. The segment covering 495–508 (RQQHRSRRSLRRRQ) has biased composition (basic residues). The span at 523–532 (VGKDQRRNNE) shows a compositional bias: basic and acidic residues. Over residues 556–567 (KPPKTNHKRGRK) the composition is skewed to basic residues.

This sequence belongs to the krueppel C2H2-type zinc-finger protein family.

The protein resides in the nucleus. In terms of biological role, may be involved in transcriptional regulation. The protein is Zinc finger protein 512 (ZNF512) of Homo sapiens (Human).